Consider the following 211-residue polypeptide: UPF0056 membrane protein YvbG (211 aa).

Transmembrane regions (helical) follow at residues 1 to 21, 47 to 67, 69 to 89, 114 to 134, 150 to 170, and 188 to 208; these read MMFS…NPIG, ILSF…FKLF, INIH…AYNL, ISVT…ATVM, MIGI…SAFI, and LILA…MFPV.

Belongs to the UPF0056 (MarC) family.

Its subcellular location is the cell membrane. This chain is UPF0056 membrane protein YvbG (yvbG), found in Bacillus subtilis (strain 168).